We begin with the raw amino-acid sequence, 1060 residues long: Carbamoyl phosphate synthase large chain (1060 aa).

The interval 1 to 401 (MPKRTDIKKI…SLLKAVRSLE (401 aa)) is carboxyphosphate synthetic domain. Arg-129, Arg-169, Gly-175, Gly-176, Lys-208, Ile-210, Glu-215, Gly-241, Ile-242, His-243, Gln-284, and Glu-298 together coordinate ATP. An ATP-grasp 1 domain is found at 133-327 (KQLMEELEQP…IAKLAAKIAV (195 aa)). Mg(2+) is bound by residues Gln-284, Glu-298, and Asn-300. Gln-284, Glu-298, and Asn-300 together coordinate Mn(2+). The segment at 402-546 (IGAYHNELAE…YSTYEVENES (145 aa)) is oligomerization domain. The carbamoyl phosphate synthetic domain stretch occupies residues 547–929 (NVSKKPSVLV…ALYKAFEASG (383 aa)). Residues 671–861 (EQALQELAIP…MAQVATKAIL (191 aa)) enclose the ATP-grasp 2 domain. Arg-707, Ser-746, Leu-748, Glu-752, Gly-777, Val-778, His-779, Ser-780, Gln-820, and Glu-832 together coordinate ATP. Mg(2+) contacts are provided by Gln-820, Glu-832, and Asn-834. Residues Gln-820, Glu-832, and Asn-834 each contribute to the Mn(2+) site. The MGS-like domain maps to 930-1060 (LHLPSYGAVL…ESRAFTTEAI (131 aa)). Residues 930–1060 (LHLPSYGAVL…ESRAFTTEAI (131 aa)) form an allosteric domain region.

It belongs to the CarB family. Composed of two chains; the small (or glutamine) chain promotes the hydrolysis of glutamine to ammonia, which is used by the large (or ammonia) chain to synthesize carbamoyl phosphate. Tetramer of heterodimers (alpha,beta)4. Requires Mg(2+) as cofactor. The cofactor is Mn(2+).

It carries out the reaction hydrogencarbonate + L-glutamine + 2 ATP + H2O = carbamoyl phosphate + L-glutamate + 2 ADP + phosphate + 2 H(+). It catalyses the reaction hydrogencarbonate + NH4(+) + 2 ATP = carbamoyl phosphate + 2 ADP + phosphate + 2 H(+). Its pathway is amino-acid biosynthesis; L-arginine biosynthesis; carbamoyl phosphate from bicarbonate: step 1/1. The protein operates within pyrimidine metabolism; UMP biosynthesis via de novo pathway; (S)-dihydroorotate from bicarbonate: step 1/3. In terms of biological role, large subunit of the glutamine-dependent carbamoyl phosphate synthetase (CPSase). CPSase catalyzes the formation of carbamoyl phosphate from the ammonia moiety of glutamine, carbonate, and phosphate donated by ATP, constituting the first step of 2 biosynthetic pathways, one leading to arginine and/or urea and the other to pyrimidine nucleotides. The large subunit (synthetase) binds the substrates ammonia (free or transferred from glutamine from the small subunit), hydrogencarbonate and ATP and carries out an ATP-coupled ligase reaction, activating hydrogencarbonate by forming carboxy phosphate which reacts with ammonia to form carbamoyl phosphate. In Enterococcus faecalis (strain ATCC 700802 / V583), this protein is Carbamoyl phosphate synthase large chain.